The following is a 111-amino-acid chain: ASFDEAPPGNSKSGEKIFKTKCAQCHTVDKGAGHKQGPNLNGLFGRQSGTTAGYSYSTANKNMAVIWEEKTLYDYLLNPKKYIPGTKMVFPGLKKPQDRADLIAYLKESTA.

At Ala-1 the chain carries N-acetylalanine. Heme c is bound by residues Cys-22, Cys-25, and His-26. Lys-80 is modified (N6,N6,N6-trimethyllysine). Residue Met-88 participates in heme c binding. Residue Lys-94 is modified to N6,N6,N6-trimethyllysine.

Belongs to the cytochrome c family. Post-translationally, binds 1 heme c group covalently per subunit.

The protein localises to the mitochondrion intermembrane space. Electron carrier protein. The oxidized form of the cytochrome c heme group can accept an electron from the heme group of the cytochrome c1 subunit of cytochrome reductase. Cytochrome c then transfers this electron to the cytochrome oxidase complex, the final protein carrier in the mitochondrial electron-transport chain. This is Cytochrome c from Vigna radiata var. radiata (Mung bean).